A 277-amino-acid polypeptide reads, in one-letter code: MDKILSGKTVAIDIKGQIKNYTEELKASGKSLKISSILVGDDGGSVYYQNFQEKLANNLGIDFEKIKLDESISEENLKLKIEELNKDDSVNGIMLLLPLPKHIDERAVTNLIDADKDLDCLSEVSVGRFYKGEKCFMPCTPNSVITLLKAYNIEIEGKEVVIIGRSNIVGKPLFQMFLNENATVTVCHSRTKNLKEVCKRADILVVAIGRANFIDSSYVREGAVVIDVGTSEVNGKITGDVNFDDVYEKASLITPVPGGVGSLTTTLLLKNVCKELD.

Residues 164 to 166 (GRS), Ser-189, and Thr-230 contribute to the NADP(+) site.

The protein belongs to the tetrahydrofolate dehydrogenase/cyclohydrolase family. As to quaternary structure, homodimer.

The enzyme catalyses (6R)-5,10-methylene-5,6,7,8-tetrahydrofolate + NADP(+) = (6R)-5,10-methenyltetrahydrofolate + NADPH. It catalyses the reaction (6R)-5,10-methenyltetrahydrofolate + H2O = (6R)-10-formyltetrahydrofolate + H(+). Its pathway is one-carbon metabolism; tetrahydrofolate interconversion. Functionally, catalyzes the oxidation of 5,10-methylenetetrahydrofolate to 5,10-methenyltetrahydrofolate and then the hydrolysis of 5,10-methenyltetrahydrofolate to 10-formyltetrahydrofolate. The polypeptide is Bifunctional protein FolD (Clostridium perfringens (strain ATCC 13124 / DSM 756 / JCM 1290 / NCIMB 6125 / NCTC 8237 / Type A)).